We begin with the raw amino-acid sequence, 217 residues long: Translation initiation factor IF-3 (217 aa).

This sequence belongs to the IF-3 family. In terms of assembly, monomer.

The protein localises to the cytoplasm. Functionally, IF-3 binds to the 30S ribosomal subunit and shifts the equilibrium between 70S ribosomes and their 50S and 30S subunits in favor of the free subunits, thus enhancing the availability of 30S subunits on which protein synthesis initiation begins. In Synechococcus sp. (strain CC9902), this protein is Translation initiation factor IF-3.